The chain runs to 254 residues: Probable transcriptional regulatory protein Saro_0419 (254 aa).

A compositionally biased stretch (basic residues) spans 1 to 14; it reads MAGHSKFKNIMHRK. Positions 1–22 are disordered; the sequence is MAGHSKFKNIMHRKGAQDKKRS.

This sequence belongs to the TACO1 family.

The protein resides in the cytoplasm. This is Probable transcriptional regulatory protein Saro_0419 from Novosphingobium aromaticivorans (strain ATCC 700278 / DSM 12444 / CCUG 56034 / CIP 105152 / NBRC 16084 / F199).